The primary structure comprises 154 residues: Urease accessory protein UreE (154 aa).

It belongs to the UreE family.

It is found in the cytoplasm. Its function is as follows. Involved in urease metallocenter assembly. Binds nickel. Probably functions as a nickel donor during metallocenter assembly. This chain is Urease accessory protein UreE, found in Escherichia coli O157:H7.